Here is a 273-residue protein sequence, read N- to C-terminus: 2,3,4,5-tetrahydropyridine-2,6-dicarboxylate N-succinyltransferase (273 aa).

Substrate contacts are provided by Arg104 and Asp141.

It belongs to the transferase hexapeptide repeat family. As to quaternary structure, homotrimer.

It localises to the cytoplasm. The catalysed reaction is (S)-2,3,4,5-tetrahydrodipicolinate + succinyl-CoA + H2O = (S)-2-succinylamino-6-oxoheptanedioate + CoA. It functions in the pathway amino-acid biosynthesis; L-lysine biosynthesis via DAP pathway; LL-2,6-diaminopimelate from (S)-tetrahydrodipicolinate (succinylase route): step 1/3. In Blochmanniella pennsylvanica (strain BPEN), this protein is 2,3,4,5-tetrahydropyridine-2,6-dicarboxylate N-succinyltransferase.